A 147-amino-acid chain; its full sequence is Cytochrome c-type biogenesis protein CcmE (147 aa).

Over 1–7 the chain is Cytoplasmic; sequence MTVRQRR. A helical; Signal-anchor for type II membrane protein transmembrane segment spans residues 8–28; that stretch reads FAMVILVVIGVSIATGLGLKA. At 29-147 the chain is on the periplasmic side; it reads FQENILFFYN…KTKANTEDKL (119 aa). The heme site is built by His-123 and Tyr-127.

This sequence belongs to the CcmE/CycJ family.

It is found in the cell inner membrane. In terms of biological role, heme chaperone required for the biogenesis of c-type cytochromes. Transiently binds heme delivered by CcmC and transfers the heme to apo-cytochromes in a process facilitated by CcmF and CcmH. The sequence is that of Cytochrome c-type biogenesis protein CcmE from Nitrosococcus oceani (strain ATCC 19707 / BCRC 17464 / JCM 30415 / NCIMB 11848 / C-107).